The sequence spans 281 residues: Aquaporin-9 (281 aa).

Over 1-17 (MGAFVNTKVYIENKNIR) the chain is Cytoplasmic. A helical membrane pass occupies residues 18 to 36 (DWLSEALSMFMYMSLLLGS). Over 37 to 50 (AATGHFSGREDDAL) the chain is Extracellular. A helical membrane pass occupies residues 51–69 (FGVIFQGFSITFGIYIGGA). Residues 70–71 (MS) are Cytoplasmic-facing. Positions 72 to 84 (GAIINPALTLAVA) form an intramembrane region, discontinuously helical. The NPA 1 motif lies at 76-78 (NPA). Over 85–90 (LLGKIS) the chain is Cytoplasmic. A helical membrane pass occupies residues 91–115 (WRKCIVLQSAQYIGSFIASAVVYLI). Residues 116–157 (YNDSLDAFGAGANFTATEPGVFRKDVAGIWSTFPKTYLKERG) are Extracellular-facing. N-linked (GlcNAc...) asparagine glycans are attached at residues N117 and N128. The chain crosses the membrane as a helical span at residues 158 to 175 (AIFNQIFCSMLLTFGFLA). The Cytoplasmic portion of the chain corresponds to 176–187 (ISDYKNFRPSKG). A helical membrane pass occupies residues 188–204 (LFPIAVGLLVMTVFLAF). Residues 205–207 (SYS) are Extracellular-facing. An intramembrane region (discontinuously helical) is located at residues 208-222 (TGAAMNPARDFSPRL). An NPA 2 motif is present at residues 213–215 (NPA). Residues 223 to 241 (WSLIIGYGIEVFSYNQYEW) are Extracellular-facing. Residues 242 to 262 (FWIPWLMPYVGAMLGALIYQL) traverse the membrane as a helical segment. Residues 263 to 281 (LIGAQWSKGQKGESKHKDP) lie on the Cytoplasmic side of the membrane.

This sequence belongs to the MIP/aquaporin (TC 1.A.8) family.

Its subcellular location is the cell membrane. It catalyses the reaction H2O(in) = H2O(out). Aquaglyceroporin that may modulate the water content and osmolytes during anhydrobiosis. This Milnesium tardigradum (Water bear) protein is Aquaporin-9.